The primary structure comprises 699 residues: tRNA wybutosine-synthesizing protein 4 (699 aa).

S-adenosyl-L-methionine is bound by residues arginine 94, glycine 120, aspartate 151, 197–198 (DL), and glutamate 224.

Belongs to the methyltransferase superfamily. LCMT family.

The catalysed reaction is 7-[(3S)-3-amino-3-carboxypropyl]wyosine(37) in tRNA(Phe) + S-adenosyl-L-methionine = 7-[(3S)-(3-amino-3-methoxycarbonyl)propyl]wyosine(37) in tRNA(Phe) + S-adenosyl-L-homocysteine. It carries out the reaction 7-[(3S)-(3-amino-3-methoxycarbonyl)propyl]wyosine(37) in tRNA(Phe) + S-adenosyl-L-methionine + CO2 = wybutosine(37) in tRNA(Phe) + S-adenosyl-L-homocysteine + 2 H(+). Its pathway is tRNA modification; wybutosine-tRNA(Phe) biosynthesis. In terms of biological role, probable S-adenosyl-L-methionine-dependent methyltransferase that acts as a component of the wybutosine biosynthesis pathway. Wybutosine is a hyper modified guanosine with a tricyclic base found at the 3'-position adjacent to the anticodon of eukaryotic phenylalanine tRNA. May methylate the carboxyl group of leucine residues to form alpha-leucine ester residues. In Eremothecium gossypii (strain ATCC 10895 / CBS 109.51 / FGSC 9923 / NRRL Y-1056) (Yeast), this protein is tRNA wybutosine-synthesizing protein 4 (PPM2).